Reading from the N-terminus, the 216-residue chain is GTP cyclohydrolase 1 (216 aa).

Zn(2+)-binding residues include Cys108, His111, and Cys179.

The protein belongs to the GTP cyclohydrolase I family. In terms of assembly, toroid-shaped homodecamer, composed of two pentamers of five dimers.

The catalysed reaction is GTP + H2O = 7,8-dihydroneopterin 3'-triphosphate + formate + H(+). It participates in cofactor biosynthesis; 7,8-dihydroneopterin triphosphate biosynthesis; 7,8-dihydroneopterin triphosphate from GTP: step 1/1. In Shewanella oneidensis (strain ATCC 700550 / JCM 31522 / CIP 106686 / LMG 19005 / NCIMB 14063 / MR-1), this protein is GTP cyclohydrolase 1.